The chain runs to 127 residues: Protein ApaG (127 aa).

The ApaG domain maps to 3–127 (ESEKYRIEVE…FMLAMPRVLH (125 aa)).

The chain is Protein ApaG from Aromatoleum aromaticum (strain DSM 19018 / LMG 30748 / EbN1) (Azoarcus sp. (strain EbN1)).